We begin with the raw amino-acid sequence, 386 residues long: 5-hydroxytryptamine receptor 1B (386 aa).

The Extracellular segment spans residues 1–42 (MEEQGIQCAPPPPAASQTGVPLTNLSHNCSADGYIYQDSIAL). N-linked (GlcNAc...) asparagine glycosylation is found at Asn-24 and Asn-28. The helical transmembrane segment at 43–68 (PWKVLLVALLALITLATTLSNAFVIA) threads the bilayer. Residues 69-82 (TVYRTRKLHTPANY) lie on the Cytoplasmic side of the membrane. The helical transmembrane segment at 83–107 (LIASLAVTDLLVSILVMPISTMYTV) threads the bilayer. The Extracellular portion of the chain corresponds to 108–115 (TGRWTLGQ). The helical transmembrane segment at 116–141 (VVCDFWLSSDITCCTASIMHLCVIAL) threads the bilayer. Residues Cys-118 and Cys-195 are joined by a disulfide bond. Ergotamine is bound by residues Asp-125 and Thr-130. Residues 142–144 (DRY) carry the DRY motif; important for ligand-induced conformation changes and signaling motif. The Cytoplasmic segment spans residues 142–161 (DRYWAITDAVEYSAKRTPKR). A helical transmembrane segment spans residues 162–180 (AAIMIVLVWVFSISISLPP). Topologically, residues 181-201 (FFWRQAKAEEEMLDCFVNTDH) are extracellular. Residue Val-197 coordinates ergotamine. Residues 202–225 (VLYTVYSTVGAFYLPTLLLIALYG) traverse the membrane as a helical segment. Residues 226–311 (RIYVEARSRI…AARERKATKT (86 aa)) are Cytoplasmic-facing. Positions 255-268 (DSPGSTSSVTSINS) are enriched in polar residues. Residues 255–278 (DSPGSTSSVTSINSRAPDVPSESG) are disordered. The helical transmembrane segment at 312-333 (LGIILGAFIVCWLPFFIISLVM) threads the bilayer. Residues 334 to 343 (PICKDACWFH) are Extracellular-facing. A helical transmembrane segment spans residues 344-366 (MAIFDFFNWLGYLNSLINPIIYT). The NPxxY motif; important for ligand-induced conformation changes and signaling motif lies at 361–365 (NPIIY). Over 367–386 (MSNEDFKQAFHKLIRFKCAG) the chain is Cytoplasmic. Cys-384 carries the S-palmitoyl cysteine lipid modification.

Belongs to the G-protein coupled receptor 1 family. As to quaternary structure, homodimer. Heterodimer with HTR1D. Phosphorylated. Desensitization of the receptor may be mediated by its phosphorylation. In terms of processing, palmitoylated. Predominantly expressed in striatum and Purkinje cells.

Its subcellular location is the cell membrane. G-protein coupled receptor for 5-hydroxytryptamine (serotonin). Also functions as a receptor for ergot alkaloid derivatives, various anxiolytic and antidepressant drugs and other psychoactive substances, such as lysergic acid diethylamide (LSD). Ligand binding causes a conformation change that triggers signaling via guanine nucleotide-binding proteins (G proteins) and modulates the activity of downstream effectors, such as adenylate cyclase. HTR1B is coupled to G(i)/G(o) G alpha proteins and mediates inhibitory neurotransmission by inhibiting adenylate cyclase activity. Arrestin family members inhibit signaling via G proteins and mediate activation of alternative signaling pathways. Regulates the release of 5-hydroxytryptamine, dopamine and acetylcholine in the brain, and thereby affects neural activity, nociceptive processing, pain perception, mood and behavior. Besides, plays a role in vasoconstriction of cerebral arteries. The sequence is that of 5-hydroxytryptamine receptor 1B (Htr1b) from Mus musculus (Mouse).